Consider the following 822-residue polypeptide: Calpain-3 (822 aa).

Positions 1 to 36 (MPTVISASVAPRTGAEPRSPGPIAQAAQGKGTEAGG) are disordered. A Calpain catalytic domain is found at 74-418 (LFVDPEFPPD…FTKLEICNLT (345 aa)). Active-site residues include C129, H335, and N359. The segment at 419–587 (ADALESDKLQ…KRNLSEEVEN (169 aa)) is domain III. The linker stretch occupies residues 588 to 649 (TISVDRPVKK…LKPGNIDQES (62 aa)). The interval 600–651 (PKPIIFGSDRANSNKELGVDQESEEGKDNTSPDKQAKSPQLKPGNIDQESKE) is disordered. Over residues 623 to 635 (EEGKDNTSPDKQA) the composition is skewed to basic and acidic residues. 4 EF-hand domains span residues 650 to 684 (KEQR…VVNK), 693 to 726 (FTLE…KKIK), 723 to 758 (KKIK…AGFH), and 788 to 822 (VRLE…TMYA). A domain IV region spans residues 650-822 (KEQRQFRNIF…LEWLQLTMYA (173 aa)). The Ca(2+) site is built by A663, D666, E668, E673, D706, D708, S710, R712, E717, D736, D738, S740, T742, E747, D801, D803, D805, and I807.

The protein belongs to the peptidase C2 family. As to quaternary structure, homodimer; via EF-hand domain 4. Interacts with TTN/titin. Interacts with CMYA5; this interaction, which results in CMYA5 proteolysis, may protect CAPN3 from autolysis. Interacts with SIMC1. Interacts with UTP25; the interaction is required for CAPN3 translocation to the nucleolus. As to expression, skeletal muscle.

It localises to the cytoplasm. The protein localises to the nucleus. Its subcellular location is the nucleolus. The catalysed reaction is Broad endopeptidase activity.. Its activity is regulated as follows. Activated by micromolar concentrations of calcium and inhibited by calpastatin. In terms of biological role, calcium-regulated non-lysosomal thiol-protease. Proteolytically cleaves CTBP1. Mediates, with UTP25, the proteasome-independent degradation of p53/TP53. In Ovis aries (Sheep), this protein is Calpain-3 (CAPN3).